The chain runs to 166 residues: Urease accessory protein UreE (166 aa).

The protein belongs to the UreE family.

It is found in the cytoplasm. Its function is as follows. Involved in urease metallocenter assembly. Binds nickel. Probably functions as a nickel donor during metallocenter assembly. The chain is Urease accessory protein UreE from Pseudomonas fluorescens (strain Pf0-1).